A 382-amino-acid chain; its full sequence is Palmitoyltransferase ZDHHC16B (382 aa).

Over 1–75 the chain is Cytoplasmic; sequence MRSWRWSVSR…IYWLVDNMTR (75 aa). A helical transmembrane segment spans residues 76–96; the sequence is WFGVVFVCLVMALTSSVVVIV. At 97-107 the chain is on the lumenal side; sequence YLCVLPIIFSS. The chain crosses the membrane as a helical span at residues 108 to 130; it reads YPVYWILWHLCYGHWNLLMVVFH. The Cytoplasmic portion of the chain corresponds to 131 to 196; it reads YYKATTTQPG…NNCVGHFNHR (66 aa). Residues 153-203 enclose the DHHC domain; the sequence is TICKKCIVPKPARTHHCSICNRCILKMDHHCPWLNNCVGHFNHRYFFSFCL. Cys-183 functions as the S-palmitoyl cysteine intermediate in the catalytic mechanism. Residues 197–217 form a helical membrane-spanning segment; that stretch reads YFFSFCLFMTMGCVYCSISAK. Over 218–275 the chain is Lumenal; sequence DMFLDAYNAIESGRYKGGASQGEAVPGAGLIYISFQHQSSYQTPPPAFTHQERMVHKS. The helical transmembrane segment at 276–296 threads the bilayer; it reads LVYLWVLTSSVAVALGALTLW. The Cytoplasmic portion of the chain corresponds to 297 to 382; that stretch reads HAILITRGET…PAYKSSTTAI (86 aa).

Belongs to the DHHC palmitoyltransferase family.

The protein localises to the endoplasmic reticulum membrane. It catalyses the reaction L-cysteinyl-[protein] + hexadecanoyl-CoA = S-hexadecanoyl-L-cysteinyl-[protein] + CoA. Its function is as follows. Palmitoyl acyltransferase that mediates palmitoylation of proteins and is required during embryonic heart development. Involved in the proliferation of neural stem cells by regulating the FGF/ERK pathway. In Danio rerio (Zebrafish), this protein is Palmitoyltransferase ZDHHC16B.